The chain runs to 203 residues: Holliday junction branch migration complex subunit RuvA (203 aa).

The segment at M1–V63 is domain I. The segment at D64–A141 is domain II. Positions A141–A145 are flexible linker. A domain III region spans residues V146–R203.

It belongs to the RuvA family. Homotetramer. Forms an RuvA(8)-RuvB(12)-Holliday junction (HJ) complex. HJ DNA is sandwiched between 2 RuvA tetramers; dsDNA enters through RuvA and exits via RuvB. An RuvB hexamer assembles on each DNA strand where it exits the tetramer. Each RuvB hexamer is contacted by two RuvA subunits (via domain III) on 2 adjacent RuvB subunits; this complex drives branch migration. In the full resolvosome a probable DNA-RuvA(4)-RuvB(12)-RuvC(2) complex forms which resolves the HJ.

The protein resides in the cytoplasm. The RuvA-RuvB-RuvC complex processes Holliday junction (HJ) DNA during genetic recombination and DNA repair, while the RuvA-RuvB complex plays an important role in the rescue of blocked DNA replication forks via replication fork reversal (RFR). RuvA specifically binds to HJ cruciform DNA, conferring on it an open structure. The RuvB hexamer acts as an ATP-dependent pump, pulling dsDNA into and through the RuvAB complex. HJ branch migration allows RuvC to scan DNA until it finds its consensus sequence, where it cleaves and resolves the cruciform DNA. This Streptomyces avermitilis (strain ATCC 31267 / DSM 46492 / JCM 5070 / NBRC 14893 / NCIMB 12804 / NRRL 8165 / MA-4680) protein is Holliday junction branch migration complex subunit RuvA.